A 294-amino-acid polypeptide reads, in one-letter code: Taste receptor type 2 member 143 (294 aa).

At 1–7 the chain is on the extracellular side; that stretch reads MPSTPTL. A helical membrane pass occupies residues 8 to 28; that stretch reads IFIVIFFLVSVASMLQNGFMI. At 29–43 the chain is on the cytoplasmic side; the sequence is IVLGREWMRNRALPA. Residues 44–64 form a helical membrane-spanning segment; that stretch reads VDMIVASLASSRFCLHGIAIL. Topologically, residues 65-80 are extracellular; sequence NNFLASFDFCYQANFV. Residues 81–101 traverse the membrane as a helical segment; it reads GILWDFINTLILWLTAWLAIF. Residues 102–128 lie on the Cytoplasmic side of the membrane; it reads YCVKISSFSHPVLFWLKWRISQLVPRL. A helical transmembrane segment spans residues 129-149; that stretch reads LLVSLIMGGLSAIISATGNII. Residues 150–180 lie on the Extracellular side of the membrane; that stretch reads ANQMIISQGFHGNCTFGHMSLDFYRYYYLSH. An N-linked (GlcNAc...) asparagine glycan is attached at N162. A helical membrane pass occupies residues 181–201; the sequence is AVLMWFTPFFLFLVSIIFLMF. Topologically, residues 202-227 are cytoplasmic; it reads SLYRHVEKMRGHRPGPWDPRTQAHTM. Residues 228-248 traverse the membrane as a helical segment; the sequence is ALKSLTVFITFYILFFLALII. Residues 249–260 are Extracellular-facing; it reads SSTKSKTMHSYW. A helical membrane pass occupies residues 261-281; it reads YWVREIIIYTGIFLNSIILVL. The Cytoplasmic portion of the chain corresponds to 282-294; sequence SNPKLRKALKMRF.

Belongs to the G-protein coupled receptor T2R family.

It localises to the membrane. Its function is as follows. Putative taste receptor which may play a role in the perception of bitterness. This chain is Taste receptor type 2 member 143, found in Rattus norvegicus (Rat).